Reading from the N-terminus, the 254-residue chain is Geranylgeranylglyceryl phosphate synthase (254 aa).

Residues D28 and S57 each coordinate Mg(2+). Residues 176–182, 207–208, and 229–230 each bind sn-glycerol 1-phosphate; these read YLEAGSG, GG, and GT.

It belongs to the GGGP/HepGP synthase family. Group II subfamily. It depends on Mg(2+) as a cofactor.

Its subcellular location is the cytoplasm. The enzyme catalyses sn-glycerol 1-phosphate + (2E,6E,10E)-geranylgeranyl diphosphate = sn-3-O-(geranylgeranyl)glycerol 1-phosphate + diphosphate. Its pathway is membrane lipid metabolism; glycerophospholipid metabolism. Functionally, prenyltransferase that catalyzes the transfer of the geranylgeranyl moiety of geranylgeranyl diphosphate (GGPP) to the C3 hydroxyl of sn-glycerol-1-phosphate (G1P). This reaction is the first ether-bond-formation step in the biosynthesis of archaeal membrane lipids. The polypeptide is Geranylgeranylglyceryl phosphate synthase (Pyrococcus horikoshii (strain ATCC 700860 / DSM 12428 / JCM 9974 / NBRC 100139 / OT-3)).